The chain runs to 282 residues: uncharacterized protein (282 aa).

The stretch at 205–277 forms a coiled coil; it reads LAQQRRVYAQ…DELQNKARDA (73 aa).

This is an uncharacterized protein from Treponema pallidum (strain Nichols).